Here is a 358-residue protein sequence, read N- to C-terminus: Uptake hydrogenase small subunit (358 aa).

Residues 1–45 constitute a signal peptide (tat-type signal); that stretch reads MSRLETFYDVMRRQGITRRSFLKYCSLTAAALGLGPAFAPRIAHA. [4Fe-4S] cluster-binding residues include Cys62, Cys65, Cys160, Cys194, His232, Cys235, Cys260, and Cys266. Residues Cys275, Cys294, and Cys297 each contribute to the [3Fe-4S] cluster site.

It belongs to the [NiFe]/[NiFeSe] hydrogenase small subunit family. As to quaternary structure, heterodimer of a large and a small subunit. [4Fe-4S] cluster is required as a cofactor. [3Fe-4S] cluster serves as cofactor. Post-translationally, predicted to be exported by the Tat system. The position of the signal peptide cleavage has been experimentally proven.

It is found in the cell membrane. The enzyme catalyses H2 + A = AH2. Its function is as follows. This enzyme recycles the H(2) produced by nitrogenase to increase the production of ATP and to protect nitrogenase against inhibition or damage by O(2) under carbon- or phosphate-limited conditions. This Azotobacter vinelandii protein is Uptake hydrogenase small subunit (hoxK).